Consider the following 412-residue polypeptide: DnaJ homolog subfamily A member 2 (412 aa).

The J domain maps to 8-70 (KLYDILGVPP…EKRELYDRYG (63 aa)). The residue at position 39 (Lys-39) is an N6-acetyllysine. A phosphoserine mark is found at Ser-78 and Ser-123. The segment at 130 to 214 (GKTTKLQLSK…CEGKKVIKEV (85 aa)) adopts a CR-type zinc-finger fold. Residue Lys-134 forms a Glycyl lysine isopeptide (Lys-Gly) (interchain with G-Cter in SUMO2) linkage. Cys-143 and Cys-146 together coordinate Zn(2+). The stretch at 143 to 150 (CSACSGQG) is one CXXCXGXG motif repeat. Lys-152 carries the post-translational modification N6-acetyllysine. Zn(2+) is bound by residues Cys-159, Cys-162, Cys-186, Cys-189, Cys-202, and Cys-205. 3 CXXCXGXG motif repeats span residues 159-166 (CSACRGRG), 186-193 (CSDCNGEG), and 202-209 (CKKCEGKK). The disordered stretch occupies residues 359–412 (PEVPNIIGDTEEVELQEFDSTRGSGGGQRREAYNDSSDEESSSHHGPGVQCAHQ). Tyr-391 is subject to Phosphotyrosine. A phosphoserine mark is found at Ser-394 and Ser-395. At Cys-409 the chain carries Cysteine methyl ester. A lipid anchor (S-farnesyl cysteine) is attached at Cys-409. Positions 410 to 412 (AHQ) are cleaved as a propeptide — removed in mature form.

The protein localises to the membrane. Its function is as follows. Co-chaperone of Hsc70. Stimulates ATP hydrolysis and the folding of unfolded proteins mediated by HSPA1A/B (in vitro). This is DnaJ homolog subfamily A member 2 (DNAJA2) from Bos taurus (Bovine).